Reading from the N-terminus, the 222-residue chain is Ras-related protein Rab-21 (222 aa).

Ala-2 carries the post-translational modification N-acetylalanine. Residues Gly-26, Gly-29, Lys-30, Thr-31, Ser-32, Asn-43, Asp-44, His-46, Thr-48, and Thr-49 each contribute to the GTP site. Thr-31 contacts Mg(2+). A Switch 1 motif is present at residues 41-54; that stretch reads KFNDKHITTLQASF. Residues Thr-49 and Asp-72 each coordinate Mg(2+). The Switch 2 signature appears at 74-92; the sequence is AGQERFHALGPIYYRDSNG. GTP is bound by residues Gly-75, Asn-130, Lys-131, Asp-133, Ala-161, and Lys-162. Residues Cys-218 and Cys-219 are each lipidated (S-geranylgeranyl cysteine). Residue Cys-219 is modified to Cysteine methyl ester. A propeptide spans 220-222 (removed in mature form); sequence SSG.

This sequence belongs to the small GTPase superfamily. Rab family. As to quaternary structure, interacts with the cytoplasmic tail of integrins ITGA1, ITGA2, ITGA5, ITGA6, ITGA11 and ITGB1; this interaction is dependent upon its GDP/GTP cycle. Interacts with RABGEF1 (via VPS9 domain). Interacts with ANKRD27. Interacts with VAMP7. Interacts (in GTP-bound form) with VAMP8 in response to starvation; the interaction probably regulates VAMP8 endolysosomal trafficking. Interacts (active GTP-bound form) with TMED10; the interaction is indirect and regulates TMED10 abundance and localization at the Golgi. Mg(2+) is required as a cofactor.

Its subcellular location is the endoplasmic reticulum membrane. The protein resides in the golgi apparatus. It is found in the trans-Golgi network. The protein localises to the golgi apparatus membrane. It localises to the early endosome membrane. Its subcellular location is the cytoplasmic vesicle membrane. The protein resides in the cleavage furrow. It is found in the cell projection. The protein localises to the neuron projection. The catalysed reaction is GTP + H2O = GDP + phosphate + H(+). With respect to regulation, regulated by guanine nucleotide exchange factors (GEFs) including ANKRD27 and RABGEF1, which promote the exchange of bound GDP for free GTP. Regulated by GTPase activating proteins (GAPs) which increase the GTP hydrolysis activity. Inhibited by GDP dissociation inhibitors (GDIs). In terms of biological role, the small GTPases Rab are key regulators of intracellular membrane trafficking, from the formation of transport vesicles to their fusion with membranes. Rabs cycle between an inactive GDP-bound form and an active GTP-bound form that is able to recruit to membranes different sets of downstream effectors directly responsible for vesicle formation, movement, tethering and fusion. RAB21 is involved in membrane trafficking control. Regulates integrin internalization and recycling, but does not influence the traffic of endosomally translocated receptors in general. As a result, may regulate cell adhesion and migration. During the mitosis of adherent cells, controls the endosomal trafficking of integrins which is required for the successful completion of cytokinesis. Involved in neurite growth. Following SBF2/MTMT13-mediated activation in response to starvation-induced autophagy, binds to and regulates SNARE protein VAMP8 endolysosomal transport required for SNARE-mediated autophagosome-lysosome fusion. Modulates protein levels of the cargo receptors TMED2 and TMED10, and required for appropriate Golgi localization of TMED10. The sequence is that of Ras-related protein Rab-21 from Mus musculus (Mouse).